We begin with the raw amino-acid sequence, 74 residues long: Peptide Im-4 (74 aa).

The signal sequence occupies residues 1-22 (MKFQYLLAIFMIVLVVTDHCQA). The residue at position 39 (K39) is a Lysine amide; partial. Positions 40-74 (GRRRRQLEARYEPQQRNFRKREIDFEKLFANMPDY) are excised as a propeptide.

Belongs to the non-disulfide-bridged peptide (NDBP) superfamily. Short antimicrobial peptide (group 4) family. In terms of tissue distribution, expressed by the venom gland.

The protein resides in the secreted. The protein localises to the target cell membrane. Its function is as follows. Antimicrobial peptide that probably forms pores in target membranes. Has antibacterial activity against Gram-positive bacteria S.aureus NBRC 13276 (MIC=5-10 uM) and B.subtilis NBRC 3009 (MIC=2.5-5 uM) but not against Gram-negative bacterium E.coli NBRC 3972. In Isometrus maculatus (Lesser brown scorpion), this protein is Peptide Im-4.